The primary structure comprises 497 residues: MTLFRHLVRITSPRLPFICGSSRRFSAKTAAVERVVSSFRSVTGDEGVSVGSAVREQHGRDESVHRCRPPDVVVFPRSVEEVSALAKICHHYRLPIIPFGTGTGLEGGVGALQGGVCFSLRKMEQVVDLHQEDFDVTVEPGVTRKSLNSYLRDTGLWFPVDPGADASLCGMAATSASGTNAVRYGTMRENVLNLEVVLADGTILHTAGKGRRPRKTAAGYNLTNLFVGSEGTLGIITKATLRLYGVPESMVSAVCSFPSVQSAVDSTVQILQAGVPIARIEFLDDVMINACNRFNNLSYAVTPTLFLEFHGSSKSMEEQVSVTEEITRDNGGSDFAWAEDEETRSRLWKARHDAWYAAMALRPGCKAYSTDVCVPISRLPQIIVETKADLISNNITGPIAGHVGDGNFHCLIVLDPNDTDEVQRVHSFTERLARRALAMDGTCTGEHGIGLGKRALLREEVGPLAIEVMKGLKASLDPRNLMNPGKVLELTQTNTEQ.

The FAD-binding PCMH-type domain maps to 65–246 (HRCRPPDVVV…TKATLRLYGV (182 aa)).

It belongs to the FAD-binding oxidoreductase/transferase type 4 family. Requires FAD as cofactor.

The protein localises to the mitochondrion. It carries out the reaction (R)-lactate + 2 Fe(III)-[cytochrome c] = 2 Fe(II)-[cytochrome c] + pyruvate + 2 H(+). In terms of biological role, involved in D-lactate, but not L-lactate catabolic process. The protein is Probable D-lactate dehydrogenase, mitochondrial (ldhd) of Danio rerio (Zebrafish).